A 135-amino-acid polypeptide reads, in one-letter code: Large ribosomal subunit protein bL19 (135 aa).

This sequence belongs to the bacterial ribosomal protein bL19 family.

Functionally, this protein is located at the 30S-50S ribosomal subunit interface and may play a role in the structure and function of the aminoacyl-tRNA binding site. The protein is Large ribosomal subunit protein bL19 of Protochlamydia amoebophila (strain UWE25).